The primary structure comprises 320 residues: Protein rlx (320 aa).

In terms of biological role, this protein is probably required for relaxation complex formation and plasmid mobilization by conjugative plasmids. The protein is Protein rlx (rlx) of Staphylococcus aureus.